The primary structure comprises 229 residues: Large ribosomal subunit protein uL1 (229 aa).

This sequence belongs to the universal ribosomal protein uL1 family. In terms of assembly, part of the 50S ribosomal subunit.

Its function is as follows. Binds directly to 23S rRNA. The L1 stalk is quite mobile in the ribosome, and is involved in E site tRNA release. Functionally, protein L1 is also a translational repressor protein, it controls the translation of the L11 operon by binding to its mRNA. The sequence is that of Large ribosomal subunit protein uL1 from Chlorobium luteolum (strain DSM 273 / BCRC 81028 / 2530) (Pelodictyon luteolum).